A 199-amino-acid polypeptide reads, in one-letter code: Protein GrpE (199 aa).

Residues 1–24 are compositionally biased toward basic and acidic residues; it reads MSKQNKKDWKKFKDEHKEEHKVEN. Residues 1 to 47 are disordered; that stretch reads MSKQNKKDWKKFKDEHKEEHKVENEILEEEIDEKSQHQEPALGHPSY.

This sequence belongs to the GrpE family. In terms of assembly, homodimer.

It localises to the cytoplasm. In terms of biological role, participates actively in the response to hyperosmotic and heat shock by preventing the aggregation of stress-denatured proteins, in association with DnaK and GrpE. It is the nucleotide exchange factor for DnaK and may function as a thermosensor. Unfolded proteins bind initially to DnaJ; upon interaction with the DnaJ-bound protein, DnaK hydrolyzes its bound ATP, resulting in the formation of a stable complex. GrpE releases ADP from DnaK; ATP binding to DnaK triggers the release of the substrate protein, thus completing the reaction cycle. Several rounds of ATP-dependent interactions between DnaJ, DnaK and GrpE are required for fully efficient folding. The sequence is that of Protein GrpE from Legionella pneumophila (strain Paris).